Here is a 107-residue protein sequence, read N- to C-terminus: Thioredoxin-1 (107 aa).

In terms of domain architecture, Thioredoxin spans 2–106; sequence ASVRTMTDFH…LTNMMAKLVK (105 aa). Residues cysteine 31 and cysteine 34 each act as nucleophile in the active site. Cysteine 31 and cysteine 34 form a disulfide bridge.

The protein belongs to the thioredoxin family.

The protein localises to the nucleus. Participates in various redox reactions through the reversible oxidation of its active center dithiol to a disulfide and catalyzes dithiol-disulfide exchange reactions. As a reducing substrate of peroxiredoxin 1, thioredoxin 2 is preferred over thioredoxin 1. Required for female meiosis and early embryonic development. In Drosophila yakuba (Fruit fly), this protein is Thioredoxin-1 (dhd).